Consider the following 143-residue polypeptide: Nucleoside diphosphate kinase (143 aa).

Residues Lys11, Phe59, Arg87, Thr93, Arg104, and Asn114 each contribute to the ATP site. His117 acts as the Pros-phosphohistidine intermediate in catalysis.

This sequence belongs to the NDK family. In terms of assembly, homotetramer. Mg(2+) serves as cofactor.

It localises to the cytoplasm. It carries out the reaction a 2'-deoxyribonucleoside 5'-diphosphate + ATP = a 2'-deoxyribonucleoside 5'-triphosphate + ADP. The enzyme catalyses a ribonucleoside 5'-diphosphate + ATP = a ribonucleoside 5'-triphosphate + ADP. Major role in the synthesis of nucleoside triphosphates other than ATP. The ATP gamma phosphate is transferred to the NDP beta phosphate via a ping-pong mechanism, using a phosphorylated active-site intermediate. This is Nucleoside diphosphate kinase from Pseudoalteromonas atlantica (strain T6c / ATCC BAA-1087).